Here is a 256-residue protein sequence, read N- to C-terminus: Major prion protein (256 aa).

Positions 1–24 (MVKSHIGSWILVLFVAMWSDVGLC) are cleaved as a signal peptide. The segment at 25-233 (KKRPKPGGGW…ESEAYYQRGA (209 aa)) is interaction with GRB2, ERI3 and SYN1. Positions 28–110 (PKPGGGWNTG…QWNKPSKPKT (83 aa)) are disordered. 5 repeat units span residues 54 to 62 (PQGGGGWGQ), 63 to 70 (PHGGGWGQ), 71 to 78 (PHGGGWGQ), 79 to 86 (PHGGGWGQ), and 87 to 95 (PHGGGGWGQ). The segment at 54 to 95 (PQGGGGWGQPHGGGWGQPHGGGWGQPHGGGWGQPHGGGGWGQ) is 5 X 8 AA tandem repeats of P-H-G-G-G-W-G-Q. Over residues 55–97 (QGGGGWGQPHGGGWGQPHGGGWGQPHGGGWGQPHGGGGWGQGG) the composition is skewed to gly residues. 12 residues coordinate Cu(2+): histidine 64, glycine 65, glycine 66, histidine 72, glycine 73, glycine 74, histidine 80, glycine 81, glycine 82, histidine 88, glycine 90, and glycine 91. An intrachain disulfide couples cysteine 182 to cysteine 217. N-linked (GlcNAc...) asparagine glycans are attached at residues asparagine 184 and asparagine 200. Alanine 233 is lipidated: GPI-anchor amidated alanine. A propeptide spans 234 to 256 (SVILFSSPPVILLISFLIFLIVG) (removed in mature form).

It belongs to the prion family. As to quaternary structure, monomer and homodimer. Has a tendency to aggregate into amyloid fibrils containing a cross-beta spine, formed by a steric zipper of superposed beta-strands. Soluble oligomers may represent an intermediate stage on the path to fibril formation. Copper binding may promote oligomerization. Interacts with GRB2, APP, ERI3/PRNPIP and SYN1. Mislocalized cytosolically exposed PrP interacts with MGRN1; this interaction alters MGRN1 subcellular location and causes lysosomal enlargement. Interacts with KIAA1191.

The protein resides in the cell membrane. It is found in the golgi apparatus. Functionally, its primary physiological function is unclear. Has cytoprotective activity against internal or environmental stresses. May play a role in neuronal development and synaptic plasticity. May be required for neuronal myelin sheath maintenance. May play a role in iron uptake and iron homeostasis. Soluble oligomers are toxic to cultured neuroblastoma cells and induce apoptosis (in vitro). Association with GPC1 (via its heparan sulfate chains) targets PRNP to lipid rafts. Also provides Cu(2+) or Zn(2+) for the ascorbate-mediated GPC1 deaminase degradation of its heparan sulfate side chains. The chain is Major prion protein (PRNP) from Cervus elaphus (Red deer).